Here is a 280-residue protein sequence, read N- to C-terminus: Cell envelope integrity protein EipB (280 aa).

A signal peptide spans 1-24; that stretch reads MRFVRIAAAASGATVFMWAGFAGA. C69 and C278 are oxidised to a cystine.

Monomer.

Its subcellular location is the periplasm. Functions in the periplasm to maintain cell envelope integrity. This chain is Cell envelope integrity protein EipB, found in Brucella abortus (strain 2308).